A 202-amino-acid chain; its full sequence is Protein DEHYDRATION-INDUCED 19 homolog 5 (202 aa).

Positions 88 to 97 are enriched in basic residues; the sequence is SHLLKRRKPS. The interval 88 to 120 is disordered; sequence SHLLKRRKPSRPSSSWPTPSNNSDPYFEGPPQY. The span at 98–112 shows a compositional bias: low complexity; the sequence is RPSSSWPTPSNNSDP.

It belongs to the Di19 family.

This Oryza sativa subsp. japonica (Rice) protein is Protein DEHYDRATION-INDUCED 19 homolog 5 (DI19-5).